Reading from the N-terminus, the 432-residue chain is MSELKDCPLQFHDFKSVDHLKVCPRYTAVLARSEDDGIGIEELDTLQLELETLLSSASRRLRVLEAETQILTDWQDKKGDRRFLKLGRDHELGAPPKHGKPKKQKLEGKAGHGPGPGPGRPKSKNLQPKIQEYEFTDDPIDVPRIPKNDAPNRFWASVEPYCADITSEEVRTLEELLKPPEDEAEHYKIPPLGKHYSQRWAQEDLLEEQKDGARAAAVADKKKGLMGPLTELDTKDVDALLKKSEAQHEQPEDGCPFGALTQRLLQALVEENIISPMEDSPIPDMSGKESGADGASTSPRNQNKPFSVPHTKSLESRIKEELIAQGLLESEDRPAEDSEDEVLAELRKRQAELKALSAHNRTKKHDLLRLAKEEVSRQELRQRVRMADNEVMDAFRKIMAARQKKRTPTKKEKDQAWKTLKERESILKLLDG.

Lysine 21 is covalently cross-linked (Glycyl lysine isopeptide (Lys-Gly) (interchain with G-Cter in SUMO2)). The stretch at 40–69 (IEELDTLQLELETLLSSASRRLRVLEAETQ) forms a coiled coil. Positions 87-126 (GRDHELGAPPKHGKPKKQKLEGKAGHGPGPGPGRPKSKNL) are disordered. Lysine 129 is covalently cross-linked (Glycyl lysine isopeptide (Lys-Gly) (interchain with G-Cter in SUMO2)). The segment at 272–319 (NIISPMEDSPIPDMSGKESGADGASTSPRNQNKPFSVPHTKSLESRIK) is disordered. 2 positions are modified to phosphoserine: serine 280 and serine 298. The segment covering 295 to 305 (ASTSPRNQNKP) has biased composition (polar residues). Residues 367–407 (LLRLAKEEVSRQELRQRVRMADNEVMDAFRKIMAARQKKRT) are a coiled coil. Lysine 418 carries the post-translational modification N6-acetyllysine.

It belongs to the NGG1 family. The PCAF complex is composed of a number of TBP-associated factors (TAFS), such as TAF5, TAF5L, TAF6, TAF6L, TAF9, TAF10 and TAF12, PCAF, and also PCAF-associated factors (PAFs), such as TADA2L/ADA2, TADA3L/ADA3 and SPT3. Interacts directly with TADA2L and PCAF and also with the high-risk HPV oncoprotein E6. Component of the STAGA transcription coactivator-HAT complex, at least composed of SUPT3H, GCN5L2, TAF5L, TAF6L, SUPT7L, TADA3L, TAD1L, TAF10, TAF12, TRRAP and TAF9. Component of the TFTC-HAT complex. Component of the ADA2A-containing complex (ATAC), composed of KAT14, KAT2A, TADA2L, TADA3L, ZZ3, MBIP, WDR5, YEATS2, CCDC101 and DR1. In terms of tissue distribution, ubiquitously expressed.

The protein resides in the nucleus. Functionally, functions as a component of the PCAF complex. The PCAF complex is capable of efficiently acetylating histones in a nucleosomal context. The PCAF complex could be considered as the human version of the yeast SAGA complex. Also known as a coactivator for p53/TP53-dependent transcriptional activation. Component of the ATAC complex, a complex with histone acetyltransferase activity on histones H3 and H4. This chain is Transcriptional adapter 3 (TADA3), found in Homo sapiens (Human).